We begin with the raw amino-acid sequence, 424 residues long: Enolase (424 aa).

Q163 lines the (2R)-2-phosphoglycerate pocket. Residue E205 is the Proton donor of the active site. D242, E285, and D312 together coordinate Mg(2+). (2R)-2-phosphoglycerate is bound by residues K337, R366, S367, and K388. The Proton acceptor role is filled by K337.

Belongs to the enolase family. Mg(2+) serves as cofactor.

It localises to the cytoplasm. The protein resides in the secreted. It is found in the cell surface. It catalyses the reaction (2R)-2-phosphoglycerate = phosphoenolpyruvate + H2O. It participates in carbohydrate degradation; glycolysis; pyruvate from D-glyceraldehyde 3-phosphate: step 4/5. Functionally, catalyzes the reversible conversion of 2-phosphoglycerate (2-PG) into phosphoenolpyruvate (PEP). It is essential for the degradation of carbohydrates via glycolysis. In Sphingopyxis alaskensis (strain DSM 13593 / LMG 18877 / RB2256) (Sphingomonas alaskensis), this protein is Enolase.